We begin with the raw amino-acid sequence, 317 residues long: uncharacterized protein (317 aa).

Positions 1 to 60 (MKHELSSMKAFVILAESSSFNNAAKLLNITQPALTRRIKKMEEDLHVQLFERTTRKVTLT) constitute an HTH lysR-type domain. Residues 20–40 (FNNAAKLLNITQPALTRRIKK) constitute a DNA-binding region (H-T-H motif).

Belongs to the LysR transcriptional regulatory family.

This is an uncharacterized protein from Escherichia coli (strain K12).